We begin with the raw amino-acid sequence, 89 residues long: Large ribosomal subunit protein bL27 (89 aa).

The tract at residues 1–20 (MAHKKAGGSSRNGRDSAGKR) is disordered.

Belongs to the bacterial ribosomal protein bL27 family.

This chain is Large ribosomal subunit protein bL27, found in Rhodopseudomonas palustris (strain HaA2).